The following is a 298-amino-acid chain: tRNA pseudouridine synthase B (298 aa).

The active-site Nucleophile is the Asp39.

It belongs to the pseudouridine synthase TruB family. Type 1 subfamily.

The enzyme catalyses uridine(55) in tRNA = pseudouridine(55) in tRNA. In terms of biological role, responsible for synthesis of pseudouridine from uracil-55 in the psi GC loop of transfer RNAs. In Lactobacillus delbrueckii subsp. bulgaricus (strain ATCC BAA-365 / Lb-18), this protein is tRNA pseudouridine synthase B.